Reading from the N-terminus, the 92-residue chain is Small ribosomal subunit protein uS19 (92 aa).

Belongs to the universal ribosomal protein uS19 family.

Protein S19 forms a complex with S13 that binds strongly to the 16S ribosomal RNA. The chain is Small ribosomal subunit protein uS19 from Crocosphaera subtropica (strain ATCC 51142 / BH68) (Cyanothece sp. (strain ATCC 51142)).